We begin with the raw amino-acid sequence, 341 residues long: tRNA N6-adenosine threonylcarbamoyltransferase (341 aa).

Fe cation-binding residues include His115 and His119. Substrate contacts are provided by residues 137–141, Asp170, Gly183, Asp187, and Asn276; that span reads AVSGG. Asp306 provides a ligand contact to Fe cation.

Belongs to the KAE1 / TsaD family. Fe(2+) serves as cofactor.

It is found in the cytoplasm. It carries out the reaction L-threonylcarbamoyladenylate + adenosine(37) in tRNA = N(6)-L-threonylcarbamoyladenosine(37) in tRNA + AMP + H(+). In terms of biological role, required for the formation of a threonylcarbamoyl group on adenosine at position 37 (t(6)A37) in tRNAs that read codons beginning with adenine. Is involved in the transfer of the threonylcarbamoyl moiety of threonylcarbamoyl-AMP (TC-AMP) to the N6 group of A37, together with TsaE and TsaB. TsaD likely plays a direct catalytic role in this reaction. This chain is tRNA N6-adenosine threonylcarbamoyltransferase, found in Lacticaseibacillus casei (strain BL23) (Lactobacillus casei).